Reading from the N-terminus, the 241-residue chain is Carboxy-S-adenosyl-L-methionine synthase (241 aa).

Residues tyrosine 38, 63-65 (GCS), 88-89 (DN), 116-117 (DI), asparagine 131, and arginine 198 each bind S-adenosyl-L-methionine.

It belongs to the class I-like SAM-binding methyltransferase superfamily. Cx-SAM synthase family. Homodimer.

The enzyme catalyses prephenate + S-adenosyl-L-methionine = carboxy-S-adenosyl-L-methionine + 3-phenylpyruvate + H2O. In terms of biological role, catalyzes the conversion of S-adenosyl-L-methionine (SAM) to carboxy-S-adenosyl-L-methionine (Cx-SAM). This is Carboxy-S-adenosyl-L-methionine synthase from Glaesserella parasuis serovar 5 (strain SH0165) (Haemophilus parasuis).